The following is a 294-amino-acid chain: MRIILITGISGSGKSVALNVLEDAGFYCVDNLPAQFIPDLARYLASEGYTHLGVATDIRSRESLEHLPDTVRELAETHQVEVLFLTASTDALVQRYSETRRRHPLSILTDGVPGSDGEPAFNDRALMEAIEMERELLSPLAESAHRIDTSNVRTNTLRSWIKELIREDSERLTLLFESFGFKHGVPSDADLVFDVRSLPNPYYDLALRPLTGRDGPVIDFLQAQPMVLAMAEDIRAYVEKWLPSFIADNRSYLTVAIGCTGGQHRSVYIAERLANYFRAHGNVLVRHRELAPAT.

Residue 8–15 (GISGSGKS) participates in ATP binding. Residue 57 to 60 (DIRS) participates in GTP binding.

This sequence belongs to the RapZ-like family.

In terms of biological role, displays ATPase and GTPase activities. In Cupriavidus pinatubonensis (strain JMP 134 / LMG 1197) (Cupriavidus necator (strain JMP 134)), this protein is Nucleotide-binding protein Reut_A0350.